A 261-amino-acid chain; its full sequence is Membrane protein insertase MisCA (261 aa).

The first 22 residues, 1–22 (MLLKRRIGLLLSMVGVFMLLAG), serve as a signal peptide directing secretion. Cys23 carries N-palmitoyl cysteine lipidation. A lipid anchor (S-diacylglycerol cysteine) is attached at Cys23. 5 consecutive transmembrane segments (helical) span residues 61–81 (YGLSIILVTILIRLLILPLMI), 131–151 (LAGCFPILIQMPILIGFYHAI), 174–194 (YILPIVAGVATFVQQKLMMAG), 204–224 (MMLWIMPIMIIVFAINFPAAL), and 225–245 (SLYWVVGNLFMIAQTFLIKGP).

It belongs to the OXA1/ALB3/YidC family. Type 2 subfamily. Mostly monomeric, it may also form dimers. Interacts with SpoIIIAE. Forms a complex with the F(1)F(0) ATP synthase in which can be found the alpha, beta, gamma, delta and epsilon subunits of F(1) and a, b and subunits of F(0). YqgA is found in the same complex.

The protein resides in the cell membrane. Its function is as follows. Required for the insertion and/or proper folding and/or complex formation of integral membrane proteins into the membrane. Involved in integration of membrane proteins that insert both dependently and independently of the Sec translocase complex, as well as at least some lipoproteins. Also involved in protein secretion processes. Essential for sporulation by activating sigma factor SpoIIIG/SigG after engulfment is completed in the prespore, maybe by acting on SpoIIIAE. It has an overlapping, although partly distinct, function compared to YqjG(MisCB). In Bacillus subtilis (strain 168), this protein is Membrane protein insertase MisCA (misCA).